Here is a 495-residue protein sequence, read N- to C-terminus: Chromosomal replication initiator protein DnaA (495 aa).

Positions 1-91 (MTADPDPPFV…ITALSRHLGQ (91 aa)) are domain I, interacts with DnaA modulators. The domain II stretch occupies residues 91–154 (QRVELGVRIA…TPAAEDPNAV (64 aa)). The interval 155-371 (SLNRRYTFDT…GALIRVTAFA (217 aa)) is domain III, AAA+ region. Residues Gly-199, Gly-201, Lys-202, and Thr-203 each contribute to the ATP site. Residues 372–495 (SLNKTPIDKS…TTRIRQRAKR (124 aa)) are domain IV, binds dsDNA.

It belongs to the DnaA family. Oligomerizes as a right-handed, spiral filament on DNA at oriC.

The protein resides in the cytoplasm. Plays an essential role in the initiation and regulation of chromosomal replication. ATP-DnaA binds to the origin of replication (oriC) to initiate formation of the DNA replication initiation complex once per cell cycle. Binds the DnaA box (a 9 base pair repeat at the origin) and separates the double-stranded (ds)DNA. Forms a right-handed helical filament on oriC DNA; dsDNA binds to the exterior of the filament while single-stranded (ss)DNA is stabiized in the filament's interior. The ATP-DnaA-oriC complex binds and stabilizes one strand of the AT-rich DNA unwinding element (DUE), permitting loading of DNA polymerase. After initiation quickly degrades to an ADP-DnaA complex that is not apt for DNA replication. Binds acidic phospholipids. The polypeptide is Chromosomal replication initiator protein DnaA (Mycobacterium sp. (strain JLS)).